Here is a 144-residue protein sequence, read N- to C-terminus: AP-4 complex subunit sigma-1 (144 aa).

The protein belongs to the adaptor complexes small subunit family. As to quaternary structure, adaptor protein complex 4 (AP-4) is a heterotetramer composed of two large adaptins (epsilon-type subunit AP4E1 and beta-type subunit AP4B1), a medium adaptin (mu-type subunit AP4M1) and a small adaptin (sigma-type AP4S1). As to expression, widely expressed.

Its subcellular location is the golgi apparatus. It is found in the trans-Golgi network membrane. In terms of biological role, component of the adaptor protein complex 4 (AP-4). Adaptor protein complexes are vesicle coat components involved both in vesicle formation and cargo selection. They control the vesicular transport of proteins in different trafficking pathways. AP-4 forms a non clathrin-associated coat on vesicles departing the trans-Golgi network (TGN) and may be involved in the targeting of proteins from the trans-Golgi network (TGN) to the endosomal-lysosomal system. It is also involved in protein sorting to the basolateral membrane in epithelial cells and the proper asymmetric localization of somatodendritic proteins in neurons. AP-4 is involved in the recognition and binding of tyrosine-based sorting signals found in the cytoplasmic part of cargos, but may also recognize other types of sorting signal. The sequence is that of AP-4 complex subunit sigma-1 from Homo sapiens (Human).